The primary structure comprises 123 residues: Large ribosomal subunit protein uL29 (123 aa).

It belongs to the universal ribosomal protein uL29 family.

This chain is Large ribosomal subunit protein uL29 (RPL35), found in Euphorbia esula (Leafy spurge).